We begin with the raw amino-acid sequence, 174 residues long: UPF0113 protein APE_0516.1 (174 aa).

The protein belongs to the UPF0113 family.

In Aeropyrum pernix (strain ATCC 700893 / DSM 11879 / JCM 9820 / NBRC 100138 / K1), this protein is UPF0113 protein APE_0516.1.